We begin with the raw amino-acid sequence, 76 residues long: Contulakin-G (76 aa).

A signal peptide spans 1–22 (MQTAYWVMVMMMVWIAAPLSEG). Positions 23–50 (GKLNDVIRGLVPDDITPQLILGSLISRR) are excised as a propeptide. Gln51 is subject to Pyrrolidone carboxylic acid. A disordered region spans residues 51–76 (QSEEGGSNATKKPYILRASDQVASGP). The O-linked (GalNAc...) threonine glycan is linked to Thr60. The propeptide occupies 67–76 (RASDQVASGP).

It belongs to the conotoxin C superfamily. O-glycosylated. The glycosylation seems to enhance the affinity to the neurotensin receptors. As to expression, expressed by the venom duct.

It is found in the secreted. Acts as an agonist of neurotensin receptors. It binds to human neurotensin type 1 receptor (NTSR1), rat neurotensin types 1 and 2 receptors (NTSR1/NTSR2) and mouse neurotensin type 3 receptor (SORT1). This is Contulakin-G from Conus geographus (Geography cone).